Consider the following 506-residue polypeptide: Anaerobic nitric oxide reductase transcription regulator NorR (506 aa).

4-aspartylphosphate is present on D57. In terms of domain architecture, Sigma-54 factor interaction spans 187–416; sequence MIGLSPAMTQ…LEHAIHRAVV (230 aa). Residues 215-222 and 278-287 contribute to the ATP site; these read GETGTGKE and ADNGTLFLDE. Residues 481-500 constitute a DNA-binding region (H-T-H motif); it reads WAASARALETDVANLHRLAK.

The protein operates within nitrogen metabolism; nitric oxide reduction. In terms of biological role, required for the expression of anaerobic nitric oxide (NO) reductase, acts as a transcriptional activator for at least the norVW operon. Activation also requires sigma-54. The protein is Anaerobic nitric oxide reductase transcription regulator NorR of Salmonella newport (strain SL254).